Here is an 85-residue protein sequence, read N- to C-terminus: Large ribosomal subunit protein bL27 (85 aa).

Positions 1 to 21 are disordered; it reads MAHKKGLGSTKNGRDSQAKRL.

It belongs to the bacterial ribosomal protein bL27 family.

The protein is Large ribosomal subunit protein bL27 of Thermus thermophilus (strain ATCC BAA-163 / DSM 7039 / HB27).